The chain runs to 343 residues: L-threonine 3-dehydrogenase (343 aa).

Cysteine 40 contacts Zn(2+). Catalysis depends on charge relay system residues threonine 42 and histidine 45. Histidine 65, glutamate 66, cysteine 95, cysteine 98, cysteine 101, and cysteine 109 together coordinate Zn(2+). Residues isoleucine 177, aspartate 197, arginine 202, 264-266 (LGI), and 288-289 (IY) contribute to the NAD(+) site.

The protein belongs to the zinc-containing alcohol dehydrogenase family. As to quaternary structure, homotetramer. Requires Zn(2+) as cofactor.

The protein resides in the cytoplasm. It carries out the reaction L-threonine + NAD(+) = (2S)-2-amino-3-oxobutanoate + NADH + H(+). Its pathway is amino-acid degradation; L-threonine degradation via oxydo-reductase pathway; glycine from L-threonine: step 1/2. Functionally, catalyzes the NAD(+)-dependent oxidation of L-threonine to 2-amino-3-ketobutyrate. This Aliivibrio fischeri (strain MJ11) (Vibrio fischeri) protein is L-threonine 3-dehydrogenase.